The following is a 493-amino-acid chain: Envelope glycoprotein gp63 (493 aa).

Residues 1–22 form the signal peptide; it reads MGKSGLYFSLICFYTLFPSSFG. Topologically, residues 23–446 are extracellular; that stretch reads NPSRCTLFIG…GLSQWAREAL (424 aa). N-linked (GlcNAc...) asparagine; by host glycosylation is found at N140 and N222. The CXXC signature appears at 225–228; that stretch reads CMVC. 3 disulfide bridges follow: C225–C228, C225–C404, and C396–C403. N-linked (GlcNAc...) asparagine; by host glycosylation is present at N292. Positions 316–336 are fusion peptide; sequence AVPIAIWLVSALAAGTGIAGG. 2 coiled-coil regions span residues 344–390 and 400–432; these read ASSK…LLFW and QEQCCFLNISNTHVSVLQERPPLEKRVITGWGL. An immunosuppression region spans residues 379-395; sequence AQNRRGLDLLFWEQGGL. The short motif at 396–404 is the CX6CC element; it reads CKAIQEQCC. N407 is a glycosylation site (N-linked (GlcNAc...) asparagine; by host). Residues 447–467 form a helical membrane-spanning segment; sequence QTGITLLALFLLLIVVGPCVI. C465 is lipidated: S-palmitoyl cysteine; by host. Over 468-493 the chain is Cytoplasmic; the sequence is RQLQTLPSRLQHRSQPYSLLNYETNL.

As to quaternary structure, the mature envelope protein (Env) consists of a trimer of SU-TM heterodimers attached by a labile interchain disulfide bond. Specific enzymatic cleavages in vivo yield mature proteins. Envelope glycoproteins are synthesized as an inactive precursor that is N-glycosylated and processed likely by host cell furin or by a furin-like protease in the Golgi to yield the mature SU and TM proteins. The cleavage site between SU and TM requires the minimal sequence [KR]-X-[KR]-R. In terms of processing, the CXXC motif is highly conserved across a broad range of retroviral envelope proteins. It is thought to participate in the formation of a labile disulfide bond possibly with the CX6CC motif present in the transmembrane protein. Isomerization of the intersubunit disulfide bond to an SU intrachain disulfide bond is thought to occur upon receptor recognition in order to allow membrane fusion. Post-translationally, the transmembrane protein is palmitoylated.

The protein localises to the virion membrane. Its subcellular location is the host cell membrane. The surface protein (SU) attaches the virus to the host cell by binding to its receptor. This interaction triggers the refolding of the transmembrane protein (TM) and is thought to activate its fusogenic potential by unmasking its fusion peptide. Fusion occurs at the host cell plasma membrane. In terms of biological role, the transmembrane protein (TM) acts as a class I viral fusion protein. Under the current model, the protein has at least 3 conformational states: pre-fusion native state, pre-hairpin intermediate state, and post-fusion hairpin state. During viral and target cell membrane fusion, the coiled coil regions (heptad repeats) assume a trimer-of-hairpins structure, positioning the fusion peptide in close proximity to the C-terminal region of the ectodomain. The formation of this structure appears to drive apposition and subsequent fusion of viral and target cell membranes. Membranes fusion leads to delivery of the nucleocapsid into the cytoplasm. The chain is Envelope glycoprotein gp63 (env) from Human T-cell leukemia virus 3 (strain Pyl43) (HTLV-3).